Here is a 328-residue protein sequence, read N- to C-terminus: Beta-ketoacyl-[acyl-carrier-protein] synthase III (328 aa).

Catalysis depends on residues C122 and H255. The segment at Q256–R260 is ACP-binding. The active site involves N285.

This sequence belongs to the thiolase-like superfamily. FabH family. In terms of assembly, homodimer.

It localises to the cytoplasm. It carries out the reaction malonyl-[ACP] + acetyl-CoA + H(+) = 3-oxobutanoyl-[ACP] + CO2 + CoA. It participates in lipid metabolism; fatty acid biosynthesis. Functionally, catalyzes the condensation reaction of fatty acid synthesis by the addition to an acyl acceptor of two carbons from malonyl-ACP. Catalyzes the first condensation reaction which initiates fatty acid synthesis and may therefore play a role in governing the total rate of fatty acid production. Possesses both acetoacetyl-ACP synthase and acetyl transacylase activities. Its substrate specificity determines the biosynthesis of branched-chain and/or straight-chain of fatty acids. The protein is Beta-ketoacyl-[acyl-carrier-protein] synthase III of Bordetella pertussis (strain Tohama I / ATCC BAA-589 / NCTC 13251).